The primary structure comprises 308 residues: Ornithine carbamoyltransferase (308 aa).

Carbamoyl phosphate-binding positions include Arg-103 and 130 to 133 (HPAQ). Residues Asn-162, Asp-221, and 225 to 226 (SM) contribute to the L-ornithine site. Residues 261-262 (CL) and Arg-289 each bind carbamoyl phosphate.

The protein belongs to the aspartate/ornithine carbamoyltransferase superfamily. OTCase family.

The protein localises to the cytoplasm. The enzyme catalyses carbamoyl phosphate + L-ornithine = L-citrulline + phosphate + H(+). It functions in the pathway amino-acid biosynthesis; L-arginine biosynthesis; L-arginine from L-ornithine and carbamoyl phosphate: step 1/3. Reversibly catalyzes the transfer of the carbamoyl group from carbamoyl phosphate (CP) to the N(epsilon) atom of ornithine (ORN) to produce L-citrulline. The sequence is that of Ornithine carbamoyltransferase from Deinococcus radiodurans (strain ATCC 13939 / DSM 20539 / JCM 16871 / CCUG 27074 / LMG 4051 / NBRC 15346 / NCIMB 9279 / VKM B-1422 / R1).